A 271-amino-acid chain; its full sequence is Interleukin-1 alpha (271 aa).

The propeptide occupies 1–112 (MAKVPDMFED…DSEEEIIKPR (112 aa)). K82 is subject to N6-acetyllysine. The segment at 82–86 (KKRRL) is nuclear localization signal (NLS). S87 carries the phosphoserine modification. N-linked (GlcNAc...) asparagine glycosylation is found at N102 and N141.

It belongs to the IL-1 family. In terms of assembly, monomer. Interacts with TMED10; the interaction mediates the translocation from the cytoplasm into the ERGIC (endoplasmic reticulum-Golgi intermediate compartment) and thereby secretion. Interacts with IL1R1. Interacts with S100A13; this interaction is the first step in the export of IL1A, followed by direct translocation of this complex across the plasma membrane. Acetylated within its nuclear localization sequence, which impacts subcellular localization. Post-translationally, proteolytic processed by CAPN1 in a calcium-dependent manner. Cleavage from 31 kDa precursor to 18 kDa biologically active molecules. In terms of processing, phosphorylated. Phosphorylation greatly enhances susceptibility to digestion and promotes the conversion of pre-IL1A alpha to the biologically active IL1A.

It localises to the nucleus. The protein localises to the cytoplasm. The protein resides in the secreted. Cytokine constitutively present intracellularly in nearly all resting non-hematopoietic cells that plays an important role in inflammation and bridges the innate and adaptive immune systems. After binding to its receptor IL1R1 together with its accessory protein IL1RAP, forms the high affinity interleukin-1 receptor complex. Signaling involves the recruitment of adapter molecules such as MYD88, IRAK1 or IRAK4. In turn, mediates the activation of NF-kappa-B and the three MAPK pathways p38, p42/p44 and JNK pathways. Within the cell, acts as an alarmin and cell death results in its liberation in the extracellular space after disruption of the cell membrane to induce inflammation and alert the host to injury or damage. In addition to its role as a danger signal, which occurs when the cytokine is passively released by cell necrosis, directly senses DNA damage and acts as signal for genotoxic stress without loss of cell integrity. In Cercocebus atys (Sooty mangabey), this protein is Interleukin-1 alpha (IL1A).